The primary structure comprises 110 residues: uncharacterized protein (110 aa).

Positions 1 to 20 (MNQQNQKISNPQTPVPTTSE) are enriched in polar residues. The tract at residues 1 to 24 (MNQQNQKISNPQTPVPTTSEMNDR) is disordered.

This is an uncharacterized protein from Bacillus subtilis (strain 168).